The sequence spans 195 residues: Penicillin-binding protein activator LpoB (195 aa).

Positions 1–16 (MKKRALIVLAALVLAS) are cleaved as a signal peptide. A lipid anchor (N-palmitoyl cysteine) is attached at Cys-17. Cys-17 is lipidated: S-diacylglycerol cysteine. The interval 19–51 (SRKPASPPAPIEPVPPPVTVSVQPPPPATSEPV) is disordered. The span at 23–51 (ASPPAPIEPVPPPVTVSVQPPPPATSEPV) shows a compositional bias: pro residues.

It belongs to the LpoB family. In terms of assembly, interacts with PBP1b.

Its subcellular location is the cell outer membrane. Regulator of peptidoglycan synthesis that is essential for the function of penicillin-binding protein 1B (PBP1b). The protein is Penicillin-binding protein activator LpoB of Sodalis glossinidius (strain morsitans).